A 172-amino-acid chain; its full sequence is Adenine phosphoribosyltransferase (172 aa).

Belongs to the purine/pyrimidine phosphoribosyltransferase family. Homodimer.

It is found in the cytoplasm. It catalyses the reaction AMP + diphosphate = 5-phospho-alpha-D-ribose 1-diphosphate + adenine. It functions in the pathway purine metabolism; AMP biosynthesis via salvage pathway; AMP from adenine: step 1/1. Its function is as follows. Catalyzes a salvage reaction resulting in the formation of AMP, that is energically less costly than de novo synthesis. This is Adenine phosphoribosyltransferase from Pediococcus pentosaceus (strain ATCC 25745 / CCUG 21536 / LMG 10740 / 183-1w).